The following is a 246-amino-acid chain: Mast cell protease 9 (246 aa).

The N-terminal stretch at 1–18 (MQALLFLMALLLPSRAGA) is a signal peptide. The propeptide at 19–20 (EE) is activation peptide. Residues 21-244 (IIGGVESEPH…HVPWINRVIK (224 aa)) enclose the Peptidase S1 domain. A disulfide bond links Cys50 and Cys66. Active-site charge relay system residues include His65 and Asp109. Cystine bridges form between Cys143–Cys208 and Cys174–Cys187. Ser202 (charge relay system) is an active-site residue.

This sequence belongs to the peptidase S1 family. Granzyme subfamily. In terms of tissue distribution, selectively expressed in uterine mast cells.

The polypeptide is Mast cell protease 9 (Mcpt9) (Mus musculus (Mouse)).